The sequence spans 234 residues: Phosphoribosylaminoimidazole-succinocarboxamide synthase (234 aa).

Belongs to the SAICAR synthetase family.

The enzyme catalyses 5-amino-1-(5-phospho-D-ribosyl)imidazole-4-carboxylate + L-aspartate + ATP = (2S)-2-[5-amino-1-(5-phospho-beta-D-ribosyl)imidazole-4-carboxamido]succinate + ADP + phosphate + 2 H(+). It participates in purine metabolism; IMP biosynthesis via de novo pathway; 5-amino-1-(5-phospho-D-ribosyl)imidazole-4-carboxamide from 5-amino-1-(5-phospho-D-ribosyl)imidazole-4-carboxylate: step 1/2. The chain is Phosphoribosylaminoimidazole-succinocarboxamide synthase from Streptococcus agalactiae serotype V (strain ATCC BAA-611 / 2603 V/R).